Consider the following 283-residue polypeptide: Gap junction beta-1 protein (283 aa).

Residues 1 to 22 lie on the Cytoplasmic side of the membrane; sequence MNWTGLYTLLSGVNRHSTAIGR. A helical membrane pass occupies residues 23–45; that stretch reads VWLSVIFIFRIMVLVVAAESVWG. The Extracellular portion of the chain corresponds to 46-75; the sequence is DEKSSFICNTLQPGCNSVCYDHFFPISHVR. A helical membrane pass occupies residues 76–95; the sequence is LWSLQLILVSTPALLVAMHV. Topologically, residues 96 to 130 are cytoplasmic; that stretch reads AHQQHIEKKMLRLEGHGDPLHLEEVKRHKVHISGT. Residues 131 to 153 form a helical membrane-spanning segment; the sequence is LWWTYVISVVFRLLFEAVFMYVF. At 154–191 the chain is on the extracellular side; it reads YLLYPGYAMVRLVKCEAFPCPNTVDCFVSRPTEKTVFT. Residues 192–214 form a helical membrane-spanning segment; it reads VFMLAASGICIILNVAEVVYLII. Topologically, residues 215–283 are cytoplasmic; it reads RACARRAQRR…AEKSDRCSAC (69 aa). Phosphoserine is present on residues Ser233, Ser258, Ser266, and Ser277.

The protein belongs to the connexin family. Beta-type (group I) subfamily. A connexon is composed of a hexamer of connexins. Interacts with CNST.

It localises to the cell membrane. The protein resides in the cell junction. It is found in the gap junction. One gap junction consists of a cluster of closely packed pairs of transmembrane channels, the connexons, through which materials of low MW diffuse from one cell to a neighboring cell. The sequence is that of Gap junction beta-1 protein (Gjb1) from Mus musculus (Mouse).